The primary structure comprises 87 residues: uncharacterized protein (87 aa).

The signal sequence occupies residues 1–19 (MLVLLVAVLVTAVYAFVHA). A helical transmembrane segment spans residues 39-59 (LVILGAAVALASILYPVLGVL).

The protein to M.leprae ML2453.

The protein localises to the membrane. This is an uncharacterized protein from Mycobacterium bovis (strain ATCC BAA-935 / AF2122/97).